The chain runs to 279 residues: Small ribosomal subunit protein uS2 (279 aa).

This sequence belongs to the universal ribosomal protein uS2 family. As to quaternary structure, component of the small ribosomal subunit. Mature ribosomes consist of a small (40S) and a large (60S) subunit. The 40S subunit contains about 33 different proteins and 1 molecule of RNA (18S). The 60S subunit contains about 49 different proteins and 3 molecules of RNA (28S, 5.8S and 5S). Interacts with ribosomal protein S21.

It localises to the cytoplasm. Functionally, required for the assembly and/or stability of the 40S ribosomal subunit. Required for the processing of the 20S rRNA-precursor to mature 18S rRNA in a late step of the maturation of 40S ribosomal subunits. The sequence is that of Small ribosomal subunit protein uS2 from Schistosoma japonicum (Blood fluke).